The following is a 3414-amino-acid chain: Genome polyprotein (3414 aa).

Residues 1–27 (MAGKAILKGKGGGPPRRVSKETAKKTR) are disordered. Topologically, residues 1–98 (MAGKAILKGK…LQKRGKRRST (98 aa)) are cytoplasmic. Positions 98-116 (TTDWTGWLLVAMLLSIALA) are cleaved as a propeptide — ER anchor for the capsid protein C, removed in mature form by serine protease NS3. The helical transmembrane segment at 99-119 (TDWTGWLLVAMLLSIALAATV) threads the bilayer. Topologically, residues 120–242 (RKEGDGTTVI…HLTRVEGWVW (123 aa)) are extracellular. Residue Asn-144 is glycosylated (N-linked (GlcNAc...) asparagine; by host). A helical membrane pass occupies residues 243-260 (KNKSLTLAVVVIVWMTVE). A topological domain (cytoplasmic) is located at residue Ser-261. Residues 262–280 (AVTRIVIVSALLCLAPAYA) traverse the membrane as a helical segment. At 281 to 727 (SRCTHLENRD…HTVLGGAFNS (447 aa)) the chain is on the extracellular side. Disulfide bonds link Cys-283–Cys-310, Cys-340–Cys-396, Cys-340–Cys-401, Cys-354–Cys-385, Cys-372–Cys-396, and Cys-372–Cys-401. The tract at residues 378–391 (DRGWGNHCGLFGKG) is fusion peptide. N-linked (GlcNAc...) asparagine; by host glycosylation is present at Asn-434. Cystine bridges form between Cys-466/Cys-570 and Cys-587/Cys-618. The chain crosses the membrane as a helical span at residues 728–748 (VFGGVGFLPRILLGISLAWLG). At 749-755 (LNMRNPT) the chain is on the cytoplasmic side. A helical transmembrane segment spans residues 756–776 (MSMSFLLAGGLVLTMTLGVGA). The Extracellular portion of the chain corresponds to 777 to 1132 (DVGCAVDTER…RSMVVADNGE (356 aa)). 6 disulfide bridges follow: Cys-780–Cys-791, Cys-831–Cys-920, Cys-955–Cys-1000, Cys-1057–Cys-1106, Cys-1068–Cys-1090, and Cys-1089–Cys-1093. N-linked (GlcNAc...) asparagine; by host glycans are attached at residues Asn-861, Asn-983, and Asn-999. Residues 1133 to 1153 (LLSEGGIPGIVAVFVVLEYII) form a helical membrane-spanning segment. At 1154–1158 (RKRPS) the chain is on the cytoplasmic side. A helical transmembrane segment spans residues 1159–1179 (AGLTVVWGGVVVLALLVTGMV). The Lumenal segment spans residues 1180-1187 (TLQSMLRY). Residues 1188–1208 (VIAVGVTFHLELGPEIVALML) traverse the membrane as a helical segment. Residues 1209–1236 (LQAVFELRVGLLGAFVLRRSLTTREVVT) lie on the Cytoplasmic side of the membrane. Residues 1237–1257 (IYFLLLVLELGLPSANLEALW) traverse the membrane as a helical segment. The Lumenal segment spans residues 1258–1293 (GWADALAMGAMIFRACTAEGKTGLGLLLVALMTQQN). The helical transmembrane segment at 1294-1314 (AVIVHQGLVIFLSVASACSVW) threads the bilayer. Residues 1315–1363 (KLLRGQREQKGLSWIVPLAGRLGGKGSGIRLLAFWELASRRDRRSFSEP) are Cytoplasmic-facing. The helical transmembrane segment at 1364 to 1381 (LTVVGVMLTLASGMMRHT) threads the bilayer. Ser-1382 is a topological domain (lumenal). Residues 1383-1403 (QEALCALAAASFLLLMLVLGT) traverse the membrane as a helical segment. At 1404–1454 (RKMQLVAEWSGCVEWHPDLADEGGEISLRVRQDALGNFHLTELEKEERMMA) the chain is on the cytoplasmic side. Residues 1410–1449 (AEWSGCVEWHPDLADEGGEISLRVRQDALGNFHLTELEKE) are interacts with and activates NS3 protease. Positions 1455 to 1475 (FWLLAGLTASALHWTGILVVM) form an intramembrane region, helical. Over 1476–2160 (GLWTMSEMLR…KMAERDAPEA (685 aa)) the chain is Cytoplasmic. Positions 1490 to 1669 (SDLVFSGQSG…EVEKSRPNLP (180 aa)) constitute a Peptidase S7 domain. Catalysis depends on charge relay system; for serine protease NS3 activity residues His-1543, Asp-1567, and Ser-1627. A Helicase ATP-binding domain is found at 1675–1831 (TGWTSKGTIT…ESNGAITSEE (157 aa)). 1688–1695 (MHPGSGKT) contributes to the ATP binding site. The short motif at 1779–1782 (DEAH) is the DEAH box element. In terms of domain architecture, Helicase C-terminal spans 1841–2000 (DGFDWITEYE…TLRGPVATFY (160 aa)). Lys-1883 is subject to N6-acetyllysine; by host. A helical membrane pass occupies residues 2161-2181 (FLTMVEMVVLGLATLGAVWCL). At 2182 to 2189 (VLRTSISR) the chain is on the lumenal side. An intramembrane region (helical) is located at residues 2190 to 2210 (MMLGTMVLLVSLALLWAGGVG). Position 2211 (Tyr-2211) is a topological domain, lumenal. A helical membrane pass occupies residues 2212–2232 (GSMAGVALVFYTLLTVLQPEA). At 2233-2244 (GKQRSSDDNKLA) the chain is on the cytoplasmic side. Residues 2245 to 2265 (YFLLTLCSLAGLVAANEMGFL) form a helical membrane-spanning segment. The Lumenal segment spans residues 2266 to 2299 (EKTKADLSAVLWSEREEPRVWSEWTNIDIQPAKS). The segment at residues 2300 to 2320 (WGTYVLVVSLFTPYIIHQLQT) is an intramembrane region (helical). The Lumenal portion of the chain corresponds to 2321–2343 (RIQQLVNSAVASGAQAMRDLGGG). Positions 2344–2364 (TPFFGVAGHVLTLGVVSLVGA) form an intramembrane region, helical. The Lumenal segment spans residues 2365–2368 (TPTS). Residues 2369-2389 (LVVGVGLAAFHLAIVVSGLEA) traverse the membrane as a helical segment. Over 2390–2432 (ELTQRAHKVFFSAMVRNPMVDGDVINPFGDGEVKPALYERKMS) the chain is Cytoplasmic. The chain crosses the membrane as a helical span at residues 2433–2453 (LILAMILCFMSVVLNRTVPAV). Topologically, residues 2454–2477 (TEASAVGLAAAGQLIRPEADTLWT) are lumenal. A helical membrane pass occupies residues 2478–2498 (MPVACGLSGVVRGSLWGFLPL). The Cytoplasmic portion of the chain corresponds to 2499-3414 (GHRLWLRTSG…WELKVESSII (916 aa)). An mRNA cap 0-1 NS5-type MT domain is found at 2512–2776 (GGSEGDTLGD…EMDLGVGTRC (265 aa)). Residue Ser-2567 participates in S-adenosyl-L-methionine binding. Ser-2567 is modified (phosphoserine). Residue Lys-2572 is the For 2'-O-MTase activity of the active site. Residues Gly-2597, Trp-2598, Thr-2615, Ile-2616, and Val-2643 each contribute to the S-adenosyl-L-methionine site. The For 2'-O-MTase activity role is filled by Asp-2657. Ile-2658 serves as a coordination point for S-adenosyl-L-methionine. Active-site for 2'-O-MTase activity residues include Lys-2694 and Glu-2730. Residues 2730–2734 (EMYYS) form an interaction with host SCRIB region. Tyr-2732 provides a ligand contact to S-adenosyl-L-methionine. Residues Glu-2950, His-2954, Cys-2959, and Cys-2962 each coordinate Zn(2+). Residues 3040–3189 (GLFYADDTAG…RPIDDRFSKA (150 aa)) form the RdRp catalytic domain. Zn(2+) is bound by residues His-3224, Cys-3240, and Cys-3359.

It in the N-terminal section; belongs to the class I-like SAM-binding methyltransferase superfamily. mRNA cap 0-1 NS5-type methyltransferase family. As to quaternary structure, homodimer. Forms heterodimers with envelope protein E in the endoplasmic reticulum and Golgi. In terms of assembly, homodimer; in the endoplasmic reticulum and Golgi. As to quaternary structure, forms homodimers as well as homohexamers. NS1 may interact with NS4A. Forms a heterodimer with serine protease NS3. May form homooligomers. In terms of assembly, forms a heterodimer with NS2B. Interacts with NS4B. Interacts with unphosphorylated RNA-directed RNA polymerase NS5; this interaction stimulates RNA-directed RNA polymerase NS5 guanylyltransferase activity. As to quaternary structure, interacts with serine protease NS3. Interacts with host STAT2; this interaction inhibits the phosphorylation of the latter, and, when all viral proteins are present (polyprotein), targets STAT2 for degradation. In terms of processing, specific enzymatic cleavages in vivo yield mature proteins. Cleavages in the lumen of endoplasmic reticulum are performed by host signal peptidase, whereas cleavages in the cytoplasmic side are performed by serine protease NS3. Signal cleavage at the 2K-4B site requires a prior NS3 protease-mediated cleavage at the 4A-2K site. Post-translationally, cleaved in post-Golgi vesicles by a host furin, releasing the mature small envelope protein M, and peptide pr. This cleavage is incomplete as up to 30% of viral particles still carry uncleaved prM. N-glycosylated. In terms of processing, N-glycosylated. The excreted form is glycosylated and this is required for efficient secretion of the protein from infected cells. Post-translationally, acetylated by host KAT5. Acetylation modulates NS3 RNA-binding and unwinding activities and plays an important positive role for viral replication. Phosphorylated on serines residues. This phosphorylation may trigger NS5 nuclear localization.

It localises to the virion. The protein resides in the host nucleus. Its subcellular location is the host cytoplasm. It is found in the host perinuclear region. The protein localises to the secreted. It localises to the virion membrane. The protein resides in the host endoplasmic reticulum membrane. The catalysed reaction is Selective hydrolysis of -Xaa-Xaa-|-Yaa- bonds in which each of the Xaa can be either Arg or Lys and Yaa can be either Ser or Ala.. The enzyme catalyses RNA(n) + a ribonucleoside 5'-triphosphate = RNA(n+1) + diphosphate. It catalyses the reaction a ribonucleoside 5'-triphosphate + H2O = a ribonucleoside 5'-diphosphate + phosphate + H(+). It carries out the reaction ATP + H2O = ADP + phosphate + H(+). The catalysed reaction is a 5'-end (5'-triphosphoguanosine)-ribonucleoside in mRNA + S-adenosyl-L-methionine = a 5'-end (N(7)-methyl 5'-triphosphoguanosine)-ribonucleoside in mRNA + S-adenosyl-L-homocysteine. The enzyme catalyses a 5'-end (N(7)-methyl 5'-triphosphoguanosine)-ribonucleoside in mRNA + S-adenosyl-L-methionine = a 5'-end (N(7)-methyl 5'-triphosphoguanosine)-(2'-O-methyl-ribonucleoside) in mRNA + S-adenosyl-L-homocysteine + H(+). Functionally, plays a role in virus budding by binding to the cell membrane and gathering the viral RNA into a nucleocapsid that forms the core of a mature virus particle. During virus entry, may induce genome penetration into the host cytoplasm after hemifusion induced by the surface proteins. Can migrate to the cell nucleus where it modulates host functions. Inhibits RNA silencing by interfering with host Dicer. In terms of biological role, prevents premature fusion activity of envelope proteins in trans-Golgi by binding to envelope protein E at pH6.0. After virion release in extracellular space, gets dissociated from E dimers. Its function is as follows. Acts as a chaperone for envelope protein E during intracellular virion assembly by masking and inactivating envelope protein E fusion peptide. prM is the only viral peptide matured by host furin in the trans-Golgi network probably to avoid catastrophic activation of the viral fusion activity in acidic Golgi compartment prior to virion release. prM-E cleavage is inefficient, and many virions are only partially matured. These uncleaved prM would play a role in immune evasion. Functionally, may play a role in virus budding. Exerts cytotoxic effects by activating a mitochondrial apoptotic pathway through M ectodomain. May display a viroporin activity. Binds to host cell surface receptor and mediates fusion between viral and cellular membranes. Envelope protein is synthesized in the endoplasmic reticulum in the form of heterodimer with protein prM. They play a role in virion budding in the ER, and the newly formed immature particle is covered with 60 spikes composed of heterodimer between precursor prM and envelope protein E. The virion is transported to the Golgi apparatus where the low pH causes dissociation of PrM-E heterodimers and formation of E homodimers. prM-E cleavage is inefficient, and many virions are only partially matured. These uncleaved prM would play a role in immune evasion. In terms of biological role, involved in immune evasion, pathogenesis and viral replication. Once cleaved off the polyprotein, is targeted to three destinations: the viral replication cycle, the plasma membrane and the extracellular compartment. Essential for viral replication. Required for formation of the replication complex and recruitment of other non-structural proteins to the ER-derived membrane structures. Excreted as a hexameric lipoparticle that plays a role against host immune response. Antagonizing the complement function. Binds to the host macrophages and dendritic cells. Inhibits signal transduction originating from Toll-like receptor 3 (TLR3). Its function is as follows. Component of the viral RNA replication complex that functions in virion assembly and antagonizes the host immune response. Functionally, required cofactor for the serine protease function of NS3. May have membrane-destabilizing activity and form viroporins. Displays three enzymatic activities: serine protease, NTPase and RNA helicase. NS3 serine protease, in association with NS2B, performs its autocleavage and cleaves the polyprotein at dibasic sites in the cytoplasm: C-prM, NS2A-NS2B, NS2B-NS3, NS3-NS4A, NS4A-2K and NS4B-NS5. NS3 RNA helicase binds RNA and unwinds dsRNA in the 3' to 5' direction. In terms of biological role, regulates the ATPase activity of the NS3 helicase activity. NS4A allows NS3 helicase to conserve energy during unwinding. Its function is as follows. Functions as a signal peptide for NS4B and is required for the interferon antagonism activity of the latter. Functionally, induces the formation of ER-derived membrane vesicles where the viral replication takes place. Inhibits interferon (IFN)-induced host STAT1 phosphorylation and nuclear translocation, thereby preventing the establishment of cellular antiviral state by blocking the IFN-alpha/beta pathway. Inhibits STAT2 translocation in the nucleus after IFN-alpha treatment. Replicates the viral (+) and (-) RNA genome, and performs the capping of genomes in the cytoplasm. NS5 methylates viral RNA cap at guanine N-7 and ribose 2'-O positions. Besides its role in RNA genome replication, also prevents the establishment of cellular antiviral state by blocking the interferon-alpha/beta (IFN-alpha/beta) signaling pathway. Inhibits host TYK2 and STAT2 phosphorylation, thereby preventing activation of JAK-STAT signaling pathway. The sequence is that of Genome polyprotein from Homo sapiens (Human).